The sequence spans 942 residues: Inter alpha-trypsin inhibitor, heavy chain 4 (942 aa).

A signal peptide spans 1-28; it reads MKSPAPAHMWNLVLFLPSLLAVLPTTTA. The VIT domain maps to 29 to 148; sequence EKNGIDIYSL…KITFELIYQE (120 aa). The N-linked (GlcNAc...) asparagine glycan is linked to Asn-81. Positions 274-457 constitute a VWFA domain; it reads NVIFVIDKSG…LQLQDFYHEV (184 aa). N-linked (GlcNAc...) asparagine glycans are attached at residues Asn-517 and Asn-577. A coiled-coil region spans residues 552 to 586; it reads TIQQQLEQRISASGAELEALEAQVLNLSLKYNFVT. Disordered stretches follow at residues 658–698 and 726–745; these read RQYI…SDFS and EKSK…HPQV. Positions 663–690 are enriched in pro residues; the sequence is PGFPGPPGPPGFPAPPGPPGFPAPPGPP. An O-linked (GalNAc...) threonine glycan is attached at Thr-732. Cys-761 and Cys-937 are oxidised to a cystine. Residue Asn-874 is glycosylated (N-linked (GlcNAc...) asparagine).

This sequence belongs to the ITIH family. In terms of assembly, interacts (via C-terminus) with DNAJC1 (via SANT 2 domain). In terms of processing, may be O-glycosylated. N-glycosylated. Highly expressed in liver. Weak expression in lung and heart.

It localises to the secreted. Type II acute-phase protein (APP) involved in inflammatory responses to trauma. May also play a role in liver development or regeneration. This chain is Inter alpha-trypsin inhibitor, heavy chain 4 (Itih4), found in Mus musculus (Mouse).